We begin with the raw amino-acid sequence, 257 residues long: 3-deoxy-manno-octulosonate cytidylyltransferase (257 aa).

The protein belongs to the KdsB family.

Its subcellular location is the cytoplasm. It carries out the reaction 3-deoxy-alpha-D-manno-oct-2-ulosonate + CTP = CMP-3-deoxy-beta-D-manno-octulosonate + diphosphate. Its pathway is nucleotide-sugar biosynthesis; CMP-3-deoxy-D-manno-octulosonate biosynthesis; CMP-3-deoxy-D-manno-octulosonate from 3-deoxy-D-manno-octulosonate and CTP: step 1/1. It functions in the pathway bacterial outer membrane biogenesis; lipopolysaccharide biosynthesis. Functionally, activates KDO (a required 8-carbon sugar) for incorporation into bacterial lipopolysaccharide in Gram-negative bacteria. The sequence is that of 3-deoxy-manno-octulosonate cytidylyltransferase from Stenotrophomonas maltophilia (strain K279a).